Reading from the N-terminus, the 465-residue chain is Protein unc-93 homolog A (465 aa).

Transmembrane regions (helical) follow at residues 8–28, 40–60, 71–91, 96–118, and 140–160; these read VLVV…LQSL, VISL…LPPI, IVVS…PGWA, TSAI…LTIS, and IFFF…SLIF. 2 N-linked (GlcNAc...) asparagine glycosylation sites follow: Asn-183 and Asn-189. The helical transmembrane segment at 200-220 threads the bilayer; the sequence is TLLGCYIGVGLLAIIFVAVFL. Residue Asn-237 is glycosylated (N-linked (GlcNAc...) asparagine). 5 helical membrane passes run 256–276, 281–301, 319–339, 343–363, and 410–427; these read LLLL…LSGE, YVTC…FAAS, IALF…LLYW, PDQL…DAVW, and IYIA…YLYV.

The protein belongs to the unc-93 family.

Its subcellular location is the membrane. This is Protein unc-93 homolog A (unc93a) from Danio rerio (Zebrafish).